Consider the following 1528-residue polypeptide: DNA topoisomerase 2-alpha (1528 aa).

Met-1 bears the N-acetylmethionine mark. Ser-4 is subject to Phosphoserine. Lys-17 is covalently cross-linked (Glycyl lysine isopeptide (Lys-Gly) (interchain with G-Cter in SUMO2)). Residues Asn-90, Asn-119, and Ser-147 to Asn-149 contribute to the ATP site. Residues Lys-155 and Lys-156 each participate in a glycyl lysine isopeptide (Lys-Gly) (interchain with G-Cter in SUMO2) cross-link. An ATP-binding site is contributed by Gly-160–Lys-167. The residue at position 281 (Thr-281) is a Phosphothreonine. The interval Lys-341–Lys-343 is interaction with DNA. Lys-351 is covalently cross-linked (Glycyl lysine isopeptide (Lys-Gly) (interchain with G-Cter in SUMO2)). Gln-375–Lys-377 serves as a coordination point for ATP. Glycyl lysine isopeptide (Lys-Gly) (interchain with G-Cter in SUMO2) cross-links involve residues Lys-385, Lys-396, Lys-415, Lys-417, Lys-424, and Lys-439. Residues Cys-454–Glu-571 form the Toprim domain. Glu-460 is a binding site for Mg(2+). Glycyl lysine isopeptide (Lys-Gly) (interchain with G-Cter in SUMO2) cross-links involve residues Lys-465, Lys-479, and Lys-528. Mg(2+) contacts are provided by Asp-540 and Asp-542. Glycyl lysine isopeptide (Lys-Gly) (interchain with G-Cter in SUMO2) cross-links involve residues Lys-583, Lys-598, Lys-613, Lys-621, Lys-624, Lys-631, Lys-638, Lys-654, Lys-661, and Lys-675. Residues Ile-714 to Leu-1168 enclose the Topo IIA-type catalytic domain. Residue Tyr-804 is the O-(5'-phospho-DNA)-tyrosine intermediate of the active site. The segment at Lys-989–Ser-998 is interaction with DNA. Lys-1074 participates in a covalent cross-link: Glycyl lysine isopeptide (Lys-Gly) (interchain with G-Cter in SUMO2). Disordered stretches follow at residues Lys-1090–Ala-1118 and Lys-1183–Ser-1211. Positions Asp-1098 to Thr-1107 are enriched in acidic residues. Ser-1105 is modified (phosphoserine; by CK1). Residues Glu-1108–Ala-1118 are compositionally biased toward low complexity. Residues Lys-1193 and Lys-1201 each participate in a glycyl lysine isopeptide (Lys-Gly) (interchain with G-Cter in SUMO2) cross-link. Ser-1211 carries the phosphoserine modification. Residue Lys-1226 forms a Glycyl lysine isopeptide (Lys-Gly) (interchain with G-Cter in SUMO2) linkage. The tract at residues Ala-1229–Phe-1528 is disordered. Residue Lys-1238 forms a Glycyl lysine isopeptide (Lys-Gly) (interchain with G-Cter in SUMO1); alternate linkage. A Glycyl lysine isopeptide (Lys-Gly) (interchain with G-Cter in SUMO2); alternate cross-link involves residue Lys-1238. Phosphothreonine is present on Thr-1245. Residues Gln-1258–Ala-1270 show a composition bias toward basic and acidic residues. Glycyl lysine isopeptide (Lys-Gly) (interchain with G-Cter in SUMO2) cross-links involve residues Lys-1272, Lys-1279, and Lys-1282. Phosphoserine is present on residues Ser-1291, Ser-1293, Ser-1295, and Ser-1298. The span at Asp-1296 to Val-1306 shows a compositional bias: low complexity. At Thr-1323 the chain carries Phosphothreonine. The segment covering Leu-1326–Leu-1345 has biased composition (acidic residues). Residues Ser-1328 and Ser-1333 each carry the phosphoserine modification. Position 1350 is a phosphothreonine (Thr-1350). Glycyl lysine isopeptide (Lys-Gly) (interchain with G-Cter in SUMO2) cross-links involve residues Lys-1359 and Lys-1363. Phosphoserine occurs at positions 1370 and 1373. Lys-1382 is covalently cross-linked (Glycyl lysine isopeptide (Lys-Gly) (interchain with G-Cter in SUMO2)). Phosphoserine occurs at positions 1384 and 1388. Lys-1418 participates in a covalent cross-link: Glycyl lysine isopeptide (Lys-Gly) (interchain with G-Cter in SUMO2); alternate. Lys-1418 is modified (N6-acetyllysine; alternate). The tract at residues Lys-1429–Lys-1435 is interaction with PLSCR1. A Glycyl lysine isopeptide (Lys-Gly) (interchain with G-Cter in SUMO2); alternate cross-link involves residue Lys-1438. At Lys-1438 the chain carries N6-acetyllysine; alternate. Glycyl lysine isopeptide (Lys-Gly) (interchain with G-Cter in SUMO2) cross-links involve residues Lys-1450 and Lys-1455. Residues Ser-1465, Ser-1467, Ser-1470, and Ser-1472 each carry the phosphoserine modification. Residues Lys-1480 and Lys-1488 each participate in a glycyl lysine isopeptide (Lys-Gly) (interchain with G-Cter in SUMO2) cross-link. The span at Ala-1506–Glu-1519 shows a compositional bias: basic and acidic residues. A Phosphoserine modification is found at Ser-1521.

It belongs to the type II topoisomerase family. Homodimer. Interacts with COPS5. Interacts with RECQL5; this stimulates DNA decatenation. Interacts with SETMAR; stimulates the topoisomerase activity. Interacts with DHX9; this interaction occurs in a E2 enzyme UBE2I- and RNA-dependent manner, negatively regulates DHX9-mediated double-stranded DNA and RNA duplex helicase activity and stimulates TOP2A-mediated supercoiled DNA relaxation activity. Interacts with HNRNPU (via C-terminus); this interaction protects the topoisomerase TOP2A from degradation and positively regulates the relaxation of supercoiled DNA in a RNA-dependent manner. Interacts with MCM3AP. Interacts with ERCC6. Interacts with PLSCR1. Interacts with GCNA; this interaction allows the resolution of topoisomerase II (TOP2A) DNA-protein cross-links. Interacts with POL1RA/RPA1 (via dock II) and UBTF in the context of Pol I complex; may assist Pol I transcription initiation by releasing supercoils occurring during DNA unwinding. Interacts with TPRN; TPRN interacts with a number of DNA damage response proteins, is recruited to sites of DNA damage and may play a role in DNA damage repair. Mg(2+) serves as cofactor. The cofactor is Mn(2+). It depends on Ca(2+) as a cofactor. Phosphorylation has no effect on catalytic activity. However, phosphorylation at Ser-1105 by CSNK1D/CK1 promotes DNA cleavable complex formation.

It localises to the cytoplasm. It is found in the nucleus. The protein resides in the nucleoplasm. Its subcellular location is the nucleolus. The catalysed reaction is ATP-dependent breakage, passage and rejoining of double-stranded DNA.. In terms of biological role, key decatenating enzyme that alters DNA topology by binding to two double-stranded DNA molecules, generating a double-stranded break in one of the strands, passing the intact strand through the broken strand, and religating the broken strand. May play a role in regulating the period length of BMAL1 transcriptional oscillation. The protein is DNA topoisomerase 2-alpha (Top2a) of Mus musculus (Mouse).